A 726-amino-acid chain; its full sequence is Amino-acid acetyltransferase, mitochondrial (726 aa).

A compositionally biased stretch (polar residues) spans 1 to 18; that stretch reads MSSRTLVGLRSTTSTHLQ. The N-terminal 44 residues, 1–44, are a transit peptide targeting the mitochondrion; it reads MSSRTLVGLRSTTSTHLQRSGVAAAAAVSSSSTSSSGSAPRRCL. Residues 1-64 are disordered; it reads MSSRTLVGLR…SAEFSSSSKS (64 aa). Over residues 20 to 39 the composition is skewed to low complexity; the sequence is SGVAAAAAVSSSSTSSSGSA. Over residues 45 to 58 the composition is skewed to polar residues; sequence SSASGRQVQQSAEF. One can recognise an N-acetyltransferase domain in the interval 547 to 716; it reads DRPRLGLDDP…YEAVCRSIQP (170 aa).

It belongs to the acetyltransferase family.

The protein localises to the mitochondrion. The enzyme catalyses L-glutamate + acetyl-CoA = N-acetyl-L-glutamate + CoA + H(+). Its pathway is amino-acid biosynthesis; L-arginine biosynthesis; N(2)-acetyl-L-ornithine from L-glutamate: step 1/4. In terms of biological role, N-acetylglutamate synthase involved in arginine biosynthesis. This chain is Amino-acid acetyltransferase, mitochondrial (arg2), found in Aspergillus niger (strain ATCC MYA-4892 / CBS 513.88 / FGSC A1513).